Here is a 493-residue protein sequence, read N- to C-terminus: Acetylcholine receptor subunit beta-type unc-29 (493 aa).

The first 26 residues, 1-26 (MRTNRLSWILVLSVVIFLVIINTINA), serve as a signal peptide directing secretion. 2 N-linked (GlcNAc...) asparagine glycosylation sites follow: N25 and N50. At 27-232 (SDDEERLMVD…QVRIRRKTLF (206 aa)) the chain is on the extracellular side. C155 and C169 are disulfide-bonded. The next 3 membrane-spanning stretches (helical) occupy residues 233–254 (YTVV…VFFL), 262–280 (ITLT…LLVS), and 296–317 (YLLL…IINV). The Cytoplasmic portion of the chain corresponds to 318 to 445 (YFRGPRTHRM…WKYVAMIIDR (128 aa)). Residues 446 to 466 (LLLYVFFGITVGGTCGILFSA) traverse the membrane as a helical segment.

The protein belongs to the ligand-gated ion channel (TC 1.A.9) family. Acetylcholine receptor (TC 1.A.9.1) subfamily. Interacts with lev-1. Component of nicotinic acetylcholine receptor composed of 2 non-alpha subunits lev-1 and unc-29, and 3 alpha subunits unc-38, unc-63 and lev-8. Interacts with oig-4. Interacts with crld-1.

Its subcellular location is the postsynaptic cell membrane. The protein resides in the cell membrane. In terms of biological role, non-alpha subunit of nicotinic acetylcholine receptor (nAChR). Involved in nAChR sensitivity to nicotine and levasimole. The polypeptide is Acetylcholine receptor subunit beta-type unc-29 (Caenorhabditis elegans).